The chain runs to 182 residues: Phospholipase A2 inhibitor gamma subunit A2 (182 aa).

Cystine bridges form between Cys3–Cys27, Cys6–Cys13, Cys20–Cys48, Cys54–Cys75, Cys76–Cys81, Cys99–Cys124, Cys117–Cys146, and Cys150–Cys172. The N-linked (GlcNAc...) asparagine glycan is linked to Asn157.

It belongs to the CNF-like-inhibitor family. As to quaternary structure, heterodimer of subunit A and subunit B.

The protein resides in the secreted. Phospholipase A2 (PA2) inhibitor. Inhibits the enzymatic activity of PA2 of Deinagkistrodon acutus. Also shows a wide anti-hemorrhage activities to D.acutus, Naja atra and Agkistrodon halys venom. The native protein is more potent than the recombinant one. This Trimerodytes annularis (Red-bellied annulate keelback) protein is Phospholipase A2 inhibitor gamma subunit A2.